The sequence spans 110 residues: UPF0122 protein SP70585_1353 (110 aa).

This sequence belongs to the UPF0122 family.

Its function is as follows. Might take part in the signal recognition particle (SRP) pathway. This is inferred from the conservation of its genetic proximity to ftsY/ffh. May be a regulatory protein. The protein is UPF0122 protein SP70585_1353 of Streptococcus pneumoniae (strain 70585).